We begin with the raw amino-acid sequence, 597 residues long: Arginine--tRNA ligase (597 aa).

The segment covering 23 to 32 (QAAAARQASQ) has biased composition (low complexity). The disordered stretch occupies residues 23–43 (QAAAARQASQPLDPQLAPASK). Positions 137–147 (PNIAKEMHVGH) match the 'HIGH' region motif.

Belongs to the class-I aminoacyl-tRNA synthetase family. In terms of assembly, monomer.

The protein localises to the cytoplasm. The catalysed reaction is tRNA(Arg) + L-arginine + ATP = L-arginyl-tRNA(Arg) + AMP + diphosphate. The polypeptide is Arginine--tRNA ligase (Synechococcus sp. (strain WH7803)).